Here is a 303-residue protein sequence, read N- to C-terminus: sn-1-specific diacylglycerol lipase ABHD11 (303 aa).

A mitochondrion-targeting transit peptide spans 1–22; the sequence is MLRWTRAWTAPYRGIGLSNSSF. Positions 55-290 constitute an AB hydrolase-1 domain; sequence PALVFLHGLF…NAGHWVHSDR (236 aa). Position 75 is an N6-succinyllysine (Lys75). Residues Ser129, Asp225, and His284 each act as charge relay system in the active site.

Belongs to the AB hydrolase superfamily. Interacts with OGDH and DLST; this interaction maintains the functional lipoylation of the 2-oxoglutarate dehydrogenase complex. Phosphorylated.

The protein localises to the mitochondrion. It localises to the mitochondrion matrix. It catalyses the reaction a 1,3-diacyl-sn-glycerol + H2O = a 1-acyl-sn-glycerol + a fatty acid + H(+). The enzyme catalyses 1-octadecanoyl-2-(9Z-octadecenoyl)-sn-glycerol + H2O = 2-(9Z-octadecenoyl)-glycerol + octadecanoate + H(+). The catalysed reaction is 1-octadecanoyl-2-(4Z,7Z,10Z,13Z,16Z,19Z-docosahexaenoyl)-sn-glycerol + H2O = 2-(4Z,7Z,10Z,13Z,16Z,19Z-docosahexaenoyl)-glycerol + octadecanoate + H(+). It carries out the reaction a 1,2-diacyl-sn-glycerol + H2O = a 2-acylglycerol + a fatty acid + H(+). It catalyses the reaction 1,2-didecanoylglycerol + H2O = decanoylglycerol + decanoate + H(+). The enzyme catalyses 1-octadecanoyl-2-(5Z,8Z,11Z,14Z-eicosatetraenoyl)-sn-glycerol + H2O = 2-(5Z,8Z,11Z,14Z-eicosatetraenoyl)-glycerol + octadecanoate + H(+). The diacylglycerol lipase activity can be modulated by phosphorylation by cAMP-dependent protein kinase. In terms of biological role, catalyzes the hydrolysis of diacylglycerol in vitro and may function as a key regulator in lipid metabolism, namely by regulating the intracellular levels of diacylglycerol. 1,2-diacyl-sn-glycerols are the preferred substrate over 1,3-diacyl-sn-glycerols. The enzyme hydrolyzes stearate in preference to palmitate from the sn-1 position of 1,2-diacyl-sn-glycerols. Maintains the functional lipoylation of the 2-oxoglutarate dehydrogenase complex (OGDHc) through its interaction with the OGDHc by preventing the formation of lipoyl adducts. In addition, is also required for the expansion and differentiation of embryonic stem cells (ESCs). This is sn-1-specific diacylglycerol lipase ABHD11 from Bos taurus (Bovine).